The chain runs to 148 residues: UPF0540 protein At1g62000 (148 aa).

An N-terminal signal peptide occupies residues 1 to 21 (MNATKFVVLLVIGILCAIVTA). Low complexity predominate over residues 123 to 132 (RANGKVASAS). Residues 123–148 (RANGKVASASRVKGSSEKKKGKGKKD) are disordered.

Belongs to the UPF0540 family.

The polypeptide is UPF0540 protein At1g62000 (Arabidopsis thaliana (Mouse-ear cress)).